The chain runs to 219 residues: 2-hydroxy-3-keto-5-methylthiopentenyl-1-phosphate phosphatase (219 aa).

The protein belongs to the HAD-like hydrolase superfamily. MtnX family.

It catalyses the reaction 2-hydroxy-5-methylsulfanyl-3-oxopent-1-enyl phosphate + H2O = 1,2-dihydroxy-5-(methylsulfanyl)pent-1-en-3-one + phosphate. It functions in the pathway amino-acid biosynthesis; L-methionine biosynthesis via salvage pathway; L-methionine from S-methyl-5-thio-alpha-D-ribose 1-phosphate: step 4/6. Dephosphorylates 2-hydroxy-3-keto-5-methylthiopentenyl-1-phosphate (HK-MTPenyl-1-P) yielding 1,2-dihydroxy-3-keto-5-methylthiopentene (DHK-MTPene). The protein is 2-hydroxy-3-keto-5-methylthiopentenyl-1-phosphate phosphatase of Bacillus cereus (strain ATCC 10987 / NRS 248).